Consider the following 360-residue polypeptide: Inward rectifier potassium channel 13 (360 aa).

At 1–50 (MDSSNCKVNAPLLSQRHRRMVTKDGHSTLQMDGAQRGLVYLRDAWGILMD) the chain is on the cytoplasmic side. A helical membrane pass occupies residues 51 to 77 (MRWRWMMLVFSASFVVHWLVFAVLWYA). Over 78–105 (VAEMNGDLEIDHDVPPENHTICVKHITS) the chain is Extracellular. An intramembrane region (helical; Pore-forming) is located at residues 106 to 122 (FTAAFSFSLETQLTIGY). Residues 119 to 124 (TIGYGT) carry the Selectivity filter motif. Topologically, residues 123–131 (GTMFPSGDC) are extracellular. Residues 132 to 157 (PSAIALLAIQMLLGLMLEAFITGAFV) traverse the membrane as a helical segment. The Cytoplasmic portion of the chain corresponds to 158–360 (AKIARPKNRA…FQIAETGLTE (203 aa)). Residue Ser287 is modified to Phosphoserine; by PKA.

The protein belongs to the inward rectifier-type potassium channel (TC 1.A.2.1) family. KCNJ13 subfamily. In terms of assembly, homotetramer. Interacts with RAB28; the interaction may facilitate cone outer segments phagocytosis. In terms of processing, phosphorylation at Ser-287 by PKA increases ionic currents. As to expression, expressed in retina.

It is found in the membrane. It localises to the cell membrane. It catalyses the reaction K(+)(in) = K(+)(out). Inhibited by Ba(2+) and Cs(+), although sensitivity to those inhibitors is much lower than in other Kir channels. In terms of biological role, inward rectifier potassium channels are characterized by a greater tendency to allow potassium to flow into the cell rather than out of it. Their voltage dependence is regulated by the concentration of extracellular potassium; as external potassium is raised, the voltage range of the channel opening shifts to more positive voltages. The inward rectification is mainly due to the blockage of outward current by internal magnesium. KCNJ13 has a very low single channel conductance, low sensitivity to block by external barium and cesium, and no dependence of its inward rectification properties on the internal blocking particle magnesium. This chain is Inward rectifier potassium channel 13, found in Mus musculus (Mouse).